The sequence spans 340 residues: Glutamyl-tRNA reductase (340 aa).

Residues 49 to 52, serine 108, 113 to 115, and glutamine 119 contribute to the substrate site; these read TCNR and ETE. The active-site Nucleophile is the cysteine 50. An NADP(+)-binding site is contributed by 188–193; the sequence is GAGEMS.

Belongs to the glutamyl-tRNA reductase family. Homodimer.

It carries out the reaction (S)-4-amino-5-oxopentanoate + tRNA(Glu) + NADP(+) = L-glutamyl-tRNA(Glu) + NADPH + H(+). The protein operates within porphyrin-containing compound metabolism; protoporphyrin-IX biosynthesis; 5-aminolevulinate from L-glutamyl-tRNA(Glu): step 1/2. Its function is as follows. Catalyzes the NADPH-dependent reduction of glutamyl-tRNA(Glu) to glutamate 1-semialdehyde (GSA). This Akkermansia muciniphila (strain ATCC BAA-835 / DSM 22959 / JCM 33894 / BCRC 81048 / CCUG 64013 / CIP 107961 / Muc) protein is Glutamyl-tRNA reductase.